A 205-amino-acid polypeptide reads, in one-letter code: Cytochrome bo(3) ubiquinol oxidase subunit 3 (205 aa).

Topologically, residues 1-26 (MIENKFNNTILNSNSSTHDKISETKK) are cytoplasmic. The helical transmembrane segment at 27–47 (LFGLWIYLMSDCIMFAVLFAV) threads the bilayer. Topologically, residues 48–69 (YAIVSSNISINLISNKIFNLSS) are extracellular. The helical transmembrane segment at 70–90 (ILLETFLLLLSSLSCGFVVIA) threads the bilayer. Residues 91–97 (MNQKRIK) lie on the Cytoplasmic side of the membrane. The helical transmembrane segment at 98-118 (MIYSFLTITFIFGLIFLLMEV) threads the bilayer. Residues 119–138 (HEFYELIIENFGPDKNAFFS) are Extracellular-facing. The chain crosses the membrane as a helical span at residues 139–159 (IFFTLVATHGVHIFFGLILIL). Topologically, residues 160-177 (SILYQIKKLGLTNSIRTR) are cytoplasmic. A helical membrane pass occupies residues 178-198 (ILCFSVFWHFLDIIWICVFTF). Topologically, residues 199-205 (VYLNGAI) are extracellular.

Belongs to the cytochrome c oxidase subunit 3 family. As to quaternary structure, heterooctamer of two A chains, two B chains, two C chains and two D chains.

It is found in the cell membrane. Its function is as follows. Cytochrome bo(3) ubiquinol terminal oxidase is the component of the aerobic respiratory chain of E.coli that predominates when cells are grown at high aeration. Has proton pump activity across the membrane in addition to electron transfer, pumping 2 protons/electron. This Buchnera aphidicola subsp. Acyrthosiphon pisum (strain APS) (Acyrthosiphon pisum symbiotic bacterium) protein is Cytochrome bo(3) ubiquinol oxidase subunit 3 (cyoC).